We begin with the raw amino-acid sequence, 195 residues long: MDIKEIALGQIRDSIATKQKCIDSILEDIIKAGEIVSKILQAGNTIFLCGNGGSSCDASHIAAELVVRYKSGNERKALPALSLSADSAVLTACSNDYGYEEIFSRQIEAFGRKGDLLIGLSTSGNSKNVLLALEKAKTRGVKTISLLGGDGGKMKNLSDLDVIVPSNVTARIQESHILIGHIICSIVEYNLFKME.

The region spanning 35–195 is the SIS domain; sequence IVSKILQAGN…IVEYNLFKME (161 aa). 51-53 serves as a coordination point for substrate; it reads NGG. The Zn(2+) site is built by H60 and E64. Residues E64, 95–96, 121–123, S126, and Q173 contribute to the substrate site; these read ND and STS. Residues Q173 and H181 each coordinate Zn(2+).

This sequence belongs to the SIS family. GmhA subfamily. Requires Zn(2+) as cofactor.

Its subcellular location is the cytoplasm. It catalyses the reaction 2 D-sedoheptulose 7-phosphate = D-glycero-alpha-D-manno-heptose 7-phosphate + D-glycero-beta-D-manno-heptose 7-phosphate. It participates in carbohydrate biosynthesis; D-glycero-D-manno-heptose 7-phosphate biosynthesis; D-glycero-alpha-D-manno-heptose 7-phosphate and D-glycero-beta-D-manno-heptose 7-phosphate from sedoheptulose 7-phosphate: step 1/1. In terms of biological role, catalyzes the isomerization of sedoheptulose 7-phosphate in D-glycero-D-manno-heptose 7-phosphate. The protein is Phosphoheptose isomerase of Leptospira interrogans serogroup Icterohaemorrhagiae serovar copenhageni (strain Fiocruz L1-130).